Reading from the N-terminus, the 203-residue chain is Outer-membrane lipoprotein carrier protein (203 aa).

The signal sequence occupies residues 1–21 (MKKWLAISCLIAGVTSTAVYA).

This sequence belongs to the LolA family. As to quaternary structure, monomer.

It is found in the periplasm. Its function is as follows. Participates in the translocation of lipoproteins from the inner membrane to the outer membrane. Only forms a complex with a lipoprotein if the residue after the N-terminal Cys is not an aspartate (The Asp acts as a targeting signal to indicate that the lipoprotein should stay in the inner membrane). The protein is Outer-membrane lipoprotein carrier protein of Pectobacterium atrosepticum (strain SCRI 1043 / ATCC BAA-672) (Erwinia carotovora subsp. atroseptica).